Here is a 472-residue protein sequence, read N- to C-terminus: Divinyl ether synthase CYP74 (472 aa).

Cysteine 425 lines the heme pocket.

This sequence belongs to the cytochrome P450 family. Requires heme as cofactor. As to expression, expressed mainly in bulbs, and at lower levels in roots.

It carries out the reaction (13S)-hydroperoxy-(9Z,11E)-octadecadienoate = etheroleate + H2O. The catalysed reaction is (13S)-hydroperoxy-(9Z,11E,15Z)-octadecatrienoate = etherolenate + H2O. The enzyme catalyses (9S)-hydroperoxy-(10E,12Z)-octadecadienoate = colneleate + H2O. It catalyses the reaction (9S)-hydroperoxy-(10E,12Z,15Z)-octadecatrienoate = colnelenate + H2O. Its pathway is lipid metabolism; oxylipin biosynthesis. Divinyl ether synthase involved in oxylipin biosynthesis. Catalyzes the conversion of (13S)-hydroperoxy-(9Z,11E)-octadecadienoate (13-HPOD) to etheroleate and (13S)-hydroperoxy-(9Z,11E,15Z)-octadecatrienoate (13-HPOT) to etherolenate. Catalyzes the conversion of (9S)-hydroperoxy-(10E,12Z)-octadecadienoate (9-HPOD) to colneleate and (9S)-hydroperoxy-(10E,12Z,15Z)-octadecatrienoate (9-HPOT) colnelenate. This Allium sativum (Garlic) protein is Divinyl ether synthase CYP74.